We begin with the raw amino-acid sequence, 386 residues long: uncharacterized protein (386 aa).

Transmembrane regions (helical) follow at residues 3 to 23 (WFSLFILSIAIGGSFALLVAI), 42 to 62 (LVGHVDSALIVGLYAFLIFLW), 72 to 92 (FASFLPALLGFFMIAGSSLFG), 102 to 122 (VPTIIHPVFFGGVSLFFLGVF), 145 to 165 (ILSTTVINSFLMPLTYLIAYF), 183 to 203 (FGGHTHQFVNAGLLISLWLLL), 212 to 232 (WFLNLLLVVFPITYFFAQIFL), 244 to 264 (TWGYMVGIGIPTIVYGLITLV), 276 to 296 (ILVLSVSLYLLGALMGYMIVG), 308 to 328 (VIASILVGVIALTFMYLQELG), and 333 to 353 (LGKFEKFIPFSTVLVCFFLSS).

This sequence to R.prowazekii RP382.

It localises to the cell membrane. This is an uncharacterized protein from Aquifex aeolicus (strain VF5).